We begin with the raw amino-acid sequence, 543 residues long: Chaperonin GroEL (543 aa).

Residues 29–32 (TLGP), 86–90 (DGTTT), Gly-413, 476–478 (NAA), and Asp-492 contribute to the ATP site.

This sequence belongs to the chaperonin (HSP60) family. In terms of assembly, forms a cylinder of 14 subunits composed of two heptameric rings stacked back-to-back. Interacts with the co-chaperonin GroES.

Its subcellular location is the cytoplasm. It carries out the reaction ATP + H2O + a folded polypeptide = ADP + phosphate + an unfolded polypeptide.. Together with its co-chaperonin GroES, plays an essential role in assisting protein folding. The GroEL-GroES system forms a nano-cage that allows encapsulation of the non-native substrate proteins and provides a physical environment optimized to promote and accelerate protein folding. In Streptococcus pyogenes serotype M5 (strain Manfredo), this protein is Chaperonin GroEL.